A 205-amino-acid chain; its full sequence is Recombination protein RecR (205 aa).

The C4-type zinc-finger motif lies at 58–75 (CSVCQNVTDRDADPCYIC). The region spanning 83–182 (SVICVVESPA…SVTKIARGIP (100 aa)) is the Toprim domain.

This sequence belongs to the RecR family.

Its function is as follows. May play a role in DNA repair. It seems to be involved in an RecBC-independent recombinational process of DNA repair. It may act with RecF and RecO. The protein is Recombination protein RecR of Chlorobium limicola (strain DSM 245 / NBRC 103803 / 6330).